An 864-amino-acid polypeptide reads, in one-letter code: Leucine--tRNA ligase (864 aa).

Positions 57–67 (PYPSGNLHMGH) match the 'HIGH' region motif. The short motif at 628 to 632 (KMSKS) is the 'KMSKS' region element. Lys-631 contributes to the ATP binding site.

It belongs to the class-I aminoacyl-tRNA synthetase family.

The protein resides in the cytoplasm. The enzyme catalyses tRNA(Leu) + L-leucine + ATP = L-leucyl-tRNA(Leu) + AMP + diphosphate. This Prochlorococcus marinus (strain MIT 9515) protein is Leucine--tRNA ligase.